The primary structure comprises 364 residues: DNA replication and repair protein RecF (364 aa).

30 to 37 provides a ligand contact to ATP; the sequence is GKNAQGKT.

Belongs to the RecF family.

It is found in the cytoplasm. Functionally, the RecF protein is involved in DNA metabolism; it is required for DNA replication and normal SOS inducibility. RecF binds preferentially to single-stranded, linear DNA. It also seems to bind ATP. The polypeptide is DNA replication and repair protein RecF (Geotalea uraniireducens (strain Rf4) (Geobacter uraniireducens)).